The sequence spans 353 residues: Histidinol-phosphate aminotransferase (353 aa).

Lys218 carries the post-translational modification N6-(pyridoxal phosphate)lysine.

This sequence belongs to the class-II pyridoxal-phosphate-dependent aminotransferase family. Histidinol-phosphate aminotransferase subfamily. In terms of assembly, homodimer. Pyridoxal 5'-phosphate is required as a cofactor.

The enzyme catalyses L-histidinol phosphate + 2-oxoglutarate = 3-(imidazol-4-yl)-2-oxopropyl phosphate + L-glutamate. Its pathway is amino-acid biosynthesis; L-histidine biosynthesis; L-histidine from 5-phospho-alpha-D-ribose 1-diphosphate: step 7/9. The protein is Histidinol-phosphate aminotransferase of Synechococcus sp. (strain JA-3-3Ab) (Cyanobacteria bacterium Yellowstone A-Prime).